A 396-amino-acid polypeptide reads, in one-letter code: Elongation factor Tu (396 aa).

The region spanning 10-205 is the tr-type G domain; sequence KPHVNIGTIG…ACDESIPDPE (196 aa). The segment at 19–26 is G1; the sequence is GHVDHGKT. 19 to 26 is a binding site for GTP; it reads GHVDHGKT. Residue Thr26 coordinates Mg(2+). The tract at residues 62–66 is G2; sequence GITIN. The G3 stretch occupies residues 83-86; it reads DAPG. GTP-binding positions include 83 to 87 and 138 to 141; these read DAPGH and NKCD. Residues 138 to 141 are G4; sequence NKCD. Positions 175-177 are G5; the sequence is SAL.

Belongs to the TRAFAC class translation factor GTPase superfamily. Classic translation factor GTPase family. EF-Tu/EF-1A subfamily. Monomer.

The protein resides in the cytoplasm. The catalysed reaction is GTP + H2O = GDP + phosphate + H(+). GTP hydrolase that promotes the GTP-dependent binding of aminoacyl-tRNA to the A-site of ribosomes during protein biosynthesis. The protein is Elongation factor Tu of Corynebacterium jeikeium (strain K411).